Here is a 695-residue protein sequence, read N- to C-terminus: Biosynthetic arginine decarboxylase 1 (695 aa).

At lysine 141 the chain carries N6-(pyridoxal phosphate)lysine. 332-342 contributes to the substrate binding site; the sequence is LDVGGGLGVDY.

Belongs to the Orn/Lys/Arg decarboxylase class-II family. SpeA subfamily. The cofactor is Mg(2+). It depends on pyridoxal 5'-phosphate as a cofactor.

The enzyme catalyses L-arginine + H(+) = agmatine + CO2. Its function is as follows. Catalyzes the biosynthesis of agmatine from arginine. The polypeptide is Biosynthetic arginine decarboxylase 1 (speA1) (Synechocystis sp. (strain ATCC 27184 / PCC 6803 / Kazusa)).